Consider the following 484-residue polypeptide: Protein nucleotidyltransferase YdiU (484 aa).

Residues Gly-81, Gly-83, Arg-84, Lys-103, Asp-115, Gly-116, Arg-166, and Arg-173 each coordinate ATP. Asp-244 acts as the Proton acceptor in catalysis. Mg(2+)-binding residues include Asn-245 and Asp-254. Asp-254 provides a ligand contact to ATP.

This sequence belongs to the SELO family. Requires Mg(2+) as cofactor. Mn(2+) is required as a cofactor.

The catalysed reaction is L-seryl-[protein] + ATP = 3-O-(5'-adenylyl)-L-seryl-[protein] + diphosphate. The enzyme catalyses L-threonyl-[protein] + ATP = 3-O-(5'-adenylyl)-L-threonyl-[protein] + diphosphate. It catalyses the reaction L-tyrosyl-[protein] + ATP = O-(5'-adenylyl)-L-tyrosyl-[protein] + diphosphate. It carries out the reaction L-histidyl-[protein] + UTP = N(tele)-(5'-uridylyl)-L-histidyl-[protein] + diphosphate. The catalysed reaction is L-seryl-[protein] + UTP = O-(5'-uridylyl)-L-seryl-[protein] + diphosphate. The enzyme catalyses L-tyrosyl-[protein] + UTP = O-(5'-uridylyl)-L-tyrosyl-[protein] + diphosphate. Functionally, nucleotidyltransferase involved in the post-translational modification of proteins. It can catalyze the addition of adenosine monophosphate (AMP) or uridine monophosphate (UMP) to a protein, resulting in modifications known as AMPylation and UMPylation. The chain is Protein nucleotidyltransferase YdiU from Shewanella baltica (strain OS185).